The chain runs to 20 residues: MAIVGTIIKIIKAIIDIFAK.

The protein belongs to the phenol-soluble modulin alpha peptides family.

Its function is as follows. Peptide which can recruit, activate and subsequently lyse neutrophils, thus eliminating the main cellular defense against infection. The polypeptide is Phenol-soluble modulin alpha 4 peptide (psmA4) (Staphylococcus aureus (strain bovine RF122 / ET3-1)).